The following is a 388-amino-acid chain: Leucine aminopeptidase 1 (388 aa).

The N-terminal stretch at 1–19 (MKSLSLLALAAIAPPAAVA) is a signal peptide. Residues 20–88 (AVVDHQVPFE…SVKSHERIQV (69 aa)) constitute a propeptide that is removed on maturation. Residue N180 is glycosylated (N-linked (GlcNAc...) asparagine). Zn(2+) is bound by residues H188, D207, E246, and D273. C322 and C326 are disulfide-bonded. Residue H355 coordinates Zn(2+).

This sequence belongs to the peptidase M28 family. M28E subfamily. In terms of assembly, monomer. The cofactor is Zn(2+).

The protein resides in the secreted. Its function is as follows. Extracellular aminopeptidase that allows assimilation of proteinaceous substrates. The protein is Leucine aminopeptidase 1 (LAP1) of Coccidioides posadasii (strain RMSCC 757 / Silveira) (Valley fever fungus).